The primary structure comprises 315 residues: Glutathione synthetase (315 aa).

An ATP-grasp domain is found at 125 to 310 (KLFTAWFSEF…ITGMLFDAIE (186 aa)). 151–207 (HQAKGDIILKPLDGMGGTSIFRVKQDDPNLGVIIETLTQYGNQYAMAQAFIPEITKG) serves as a coordination point for ATP. Mg(2+) contacts are provided by glutamate 281 and asparagine 283.

This sequence belongs to the prokaryotic GSH synthase family. Requires Mg(2+) as cofactor. Mn(2+) serves as cofactor.

It carries out the reaction gamma-L-glutamyl-L-cysteine + glycine + ATP = glutathione + ADP + phosphate + H(+). It functions in the pathway sulfur metabolism; glutathione biosynthesis; glutathione from L-cysteine and L-glutamate: step 2/2. This Shewanella oneidensis (strain ATCC 700550 / JCM 31522 / CIP 106686 / LMG 19005 / NCIMB 14063 / MR-1) protein is Glutathione synthetase.